We begin with the raw amino-acid sequence, 252 residues long: Imidazole glycerol phosphate synthase subunit HisF (252 aa).

Catalysis depends on residues Asp-11 and Asp-130.

The protein belongs to the HisA/HisF family. Heterodimer of HisH and HisF.

The protein resides in the cytoplasm. It carries out the reaction 5-[(5-phospho-1-deoxy-D-ribulos-1-ylimino)methylamino]-1-(5-phospho-beta-D-ribosyl)imidazole-4-carboxamide + L-glutamine = D-erythro-1-(imidazol-4-yl)glycerol 3-phosphate + 5-amino-1-(5-phospho-beta-D-ribosyl)imidazole-4-carboxamide + L-glutamate + H(+). It functions in the pathway amino-acid biosynthesis; L-histidine biosynthesis; L-histidine from 5-phospho-alpha-D-ribose 1-diphosphate: step 5/9. Its function is as follows. IGPS catalyzes the conversion of PRFAR and glutamine to IGP, AICAR and glutamate. The HisF subunit catalyzes the cyclization activity that produces IGP and AICAR from PRFAR using the ammonia provided by the HisH subunit. This chain is Imidazole glycerol phosphate synthase subunit HisF, found in Rhodospirillum rubrum (strain ATCC 11170 / ATH 1.1.1 / DSM 467 / LMG 4362 / NCIMB 8255 / S1).